Reading from the N-terminus, the 50-residue chain is Small integral membrane protein 46 (50 aa).

The helical transmembrane segment at 15-37 (TTFQLWLQLLLWAHLAVRFLGYL) threads the bilayer.

The protein resides in the membrane. This Homo sapiens (Human) protein is Small integral membrane protein 46.